A 99-amino-acid chain; its full sequence is Small ribosomal subunit protein bS18 (99 aa).

It belongs to the bacterial ribosomal protein bS18 family. Part of the 30S ribosomal subunit. Forms a tight heterodimer with protein bS6.

In terms of biological role, binds as a heterodimer with protein bS6 to the central domain of the 16S rRNA, where it helps stabilize the platform of the 30S subunit. The sequence is that of Small ribosomal subunit protein bS18 from Christiangramia forsetii (strain DSM 17595 / CGMCC 1.15422 / KT0803) (Gramella forsetii).